A 292-amino-acid chain; its full sequence is ATP synthase gamma chain (292 aa).

It belongs to the ATPase gamma chain family. As to quaternary structure, F-type ATPases have 2 components, CF(1) - the catalytic core - and CF(0) - the membrane proton channel. CF(1) has five subunits: alpha(3), beta(3), gamma(1), delta(1), epsilon(1). CF(0) has three main subunits: a, b and c.

It is found in the cell inner membrane. Functionally, produces ATP from ADP in the presence of a proton gradient across the membrane. The gamma chain is believed to be important in regulating ATPase activity and the flow of protons through the CF(0) complex. The sequence is that of ATP synthase gamma chain from Syntrophobacter fumaroxidans (strain DSM 10017 / MPOB).